A 222-amino-acid chain; its full sequence is 26S proteasome non-ATPase regulatory subunit 9 (222 aa).

The PDZ domain occupies Q108–R194. S128 bears the Phosphoserine mark.

The protein belongs to the proteasome subunit p27 family. In terms of assembly, interacts with PSMC3. Part of a transient complex (modulator) containing PSMD9, PSMC6 and PSMC3 formed during the assembly of the 26S proteasome.

Acts as a chaperone during the assembly of the 26S proteasome, specifically of the base subcomplex of the PA700/19S regulatory complex (RC). During the base subcomplex assembly is part of an intermediate PSMD9:PSMC6:PSMC3 module, also known as modulator trimer complex; PSMD9 is released during the further base assembly process. The protein is 26S proteasome non-ATPase regulatory subunit 9 (Psmd9) of Mus musculus (Mouse).